The primary structure comprises 250 residues: Type III pantothenate kinase (250 aa).

Position 13–20 (13–20) interacts with ATP; that stretch reads DVGNSYLK. 110–113 provides a ligand contact to substrate; it reads GNDL. The active-site Proton acceptor is the aspartate 112. Threonine 134 lines the ATP pocket. Threonine 186 contacts substrate.

The protein belongs to the type III pantothenate kinase family. In terms of assembly, homodimer. Requires NH4(+) as cofactor. The cofactor is K(+).

The protein localises to the cytoplasm. The catalysed reaction is (R)-pantothenate + ATP = (R)-4'-phosphopantothenate + ADP + H(+). The protein operates within cofactor biosynthesis; coenzyme A biosynthesis; CoA from (R)-pantothenate: step 1/5. Its function is as follows. Catalyzes the phosphorylation of pantothenate (Pan), the first step in CoA biosynthesis. This chain is Type III pantothenate kinase, found in Mycoplasmopsis synoviae (strain 53) (Mycoplasma synoviae).